A 167-amino-acid polypeptide reads, in one-letter code: MRTLMIEPLTKEAFAPFGDVIETDGSDHFMINNGSTMRFHKLATVETAKPEDNAIISIFRADALDMPLTVCMLERHPLGSQAFIPLLGNPFLIVVAPLGDAPVSGLVRAFVTNGRQGINYHRGVWHHPVLTIEKRDDFLVVDRSGTGNNCDEHFFEEDERLILAPHQ.

It belongs to the ureidoglycolate lyase family. As to quaternary structure, homodimer. Ni(2+) serves as cofactor.

The catalysed reaction is (S)-ureidoglycolate = urea + glyoxylate. Its pathway is nitrogen metabolism; (S)-allantoin degradation. Catalyzes the catabolism of the allantoin degradation intermediate (S)-ureidoglycolate, generating urea and glyoxylate. Involved in the utilization of allantoin as nitrogen source. The protein is Ureidoglycolate lyase of Pseudomonas fluorescens (strain SBW25).